The primary structure comprises 100 residues: uncharacterized protein (100 aa).

2 helical membrane-spanning segments follow: residues 1–21 (MLVL…YKVK) and 54–74 (MILF…VIGA).

Its subcellular location is the cell membrane. This is an uncharacterized protein from Bacillus subtilis (strain 168).